A 288-amino-acid polypeptide reads, in one-letter code: Structure-specific endonuclease subunit SLX1 (288 aa).

In terms of domain architecture, GIY-YIG spans 10 to 93 (DFYCSYLLRS…QHSYKTRFIE (84 aa)). Residues 209 to 265 (CMICDKKIDYIHDEGTQMVGFCSDDECDFLSCLSCLYKEFTKNSKQIIPKSGHCPNC) form an SLX1-type zinc finger.

Belongs to the SLX1 family. Forms a heterodimer with SLX4. Requires a divalent metal cation as cofactor.

The protein localises to the nucleus. Functionally, catalytic subunit of the SLX1-SLX4 structure-specific endonuclease that resolves DNA secondary structures generated during DNA repair and recombination. Has endonuclease activity towards branched DNA substrates, introducing single-strand cuts in duplex DNA close to junctions with ss-DNA. This chain is Structure-specific endonuclease subunit SLX1, found in Kluyveromyces lactis (strain ATCC 8585 / CBS 2359 / DSM 70799 / NBRC 1267 / NRRL Y-1140 / WM37) (Yeast).